A 507-amino-acid chain; its full sequence is Iroquois-class homeodomain protein IRX-3 (507 aa).

The tract at residues 19–39 (RPGAAGGGGGGSSAGGRSGPG) is disordered. Positions 22–39 (AAGGGGGGSSAGGRSGPG) are enriched in gly residues. Residues 130–192 (DPSRPKNATR…NARRRLKKEN (63 aa)) constitute a DNA-binding region (homeobox; TALE-type). Disordered regions lie at residues 193 to 398 (KMTW…AAAA) and 416 to 468 (RPFP…SGTD). Acidic residues-rich tracts occupy residues 213 to 223 (REEEDEEEDEE) and 230 to 261 (EMEEEELAGEEEDTGGEGLADDDEDEEIDLEN). Pro residues-rich tracts occupy residues 314 to 342 (APPPPPVARAPASPPSPPSSLDPCAPAPA) and 418 to 428 (FPGPPAGPRPH). Phosphoserine is present on residues Ser-326 and Ser-329. Over residues 436–460 (APQHLLGLPGAAGHPAAAAAAYARP) the composition is skewed to low complexity.

This sequence belongs to the TALE/IRO homeobox family. As to expression, expressed by neural progenitor cells in discrete domains of the ventral neural tube. Also expressed in specific and overlapping patterns with Irx1 and Irx2 in the developing and adult metanephric kidney. In the adult metanephros, renal expression is confined to the S3 segment of the proximal tubule, in the loop of Henle.

It is found in the nucleus. Its function is as follows. Transcription factor involved in SHH-dependent neural patterning. Together with NKX2-2 and NKX6-1 acts to restrict the generation of motor neurons to the appropriate region of the neural tube. Belongs to the class I proteins of neuronal progenitor factors, which are repressed by SHH signals. Involved in the transcriptional repression of MNX1 in non-motor neuron cells. Acts as a regulator of energy metabolism. The polypeptide is Iroquois-class homeodomain protein IRX-3 (Irx3) (Mus musculus (Mouse)).